The chain runs to 219 residues: Transmembrane protein 179B (219 aa).

4 consecutive transmembrane segments (helical) span residues 6–26 (PLLL…ITAA), 69–89 (ISVC…YIAF), 105–125 (LGLS…LKIG), and 167–187 (AETA…LVLI). The tract at residues 195 to 219 (IRPGTEDPSAPPSETEPFFNRPGRP) is disordered.

The protein belongs to the TMEM179 family.

It localises to the membrane. In Danio rerio (Zebrafish), this protein is Transmembrane protein 179B (tmem179b).